We begin with the raw amino-acid sequence, 446 residues long: Phosphoglucosamine mutase (446 aa).

The Phosphoserine intermediate role is filled by Ser-99. Mg(2+)-binding residues include Ser-99, Asp-242, Asp-244, and Asp-246. Phosphoserine is present on Ser-99.

It belongs to the phosphohexose mutase family. Requires Mg(2+) as cofactor. Activated by phosphorylation.

The enzyme catalyses alpha-D-glucosamine 1-phosphate = D-glucosamine 6-phosphate. Catalyzes the conversion of glucosamine-6-phosphate to glucosamine-1-phosphate. This Campylobacter concisus (strain 13826) protein is Phosphoglucosamine mutase.